We begin with the raw amino-acid sequence, 95 residues long: MEMNLQFFSHHKGGGSTSNGRDSAGRRLGTKRADGQAAKAGMIIYRQRGTHIYPGVNVGRGNDDTLFALADGVVRFERKGRDKRQVSVYPVADAE.

Positions 1–8 (MEMNLQFF) are excised as a propeptide. The disordered stretch occupies residues 1–34 (MEMNLQFFSHHKGGGSTSNGRDSAGRRLGTKRAD).

The protein belongs to the bacterial ribosomal protein bL27 family. In terms of processing, the N-terminus is cleaved by ribosomal processing cysteine protease Prp.

The polypeptide is Large ribosomal subunit protein bL27 (Pediococcus pentosaceus (strain ATCC 25745 / CCUG 21536 / LMG 10740 / 183-1w)).